The following is an 87-amino-acid chain: Small ribosomal subunit protein bS20 (87 aa).

Residues 1–27 (MANIKSAKKRALQSEKRRQHNASRRSM) are disordered.

This sequence belongs to the bacterial ribosomal protein bS20 family.

Functionally, binds directly to 16S ribosomal RNA. In Aeromonas hydrophila subsp. hydrophila (strain ATCC 7966 / DSM 30187 / BCRC 13018 / CCUG 14551 / JCM 1027 / KCTC 2358 / NCIMB 9240 / NCTC 8049), this protein is Small ribosomal subunit protein bS20.